Reading from the N-terminus, the 194-residue chain is Putative 3-methyladenine DNA glycosylase (194 aa).

The protein belongs to the DNA glycosylase MPG family.

This chain is Putative 3-methyladenine DNA glycosylase, found in Anaeromyxobacter sp. (strain Fw109-5).